A 282-amino-acid polypeptide reads, in one-letter code: Biotin synthase (282 aa).

A Radical SAM core domain is found at 1 to 228 (MQEIFLCSIS…NARLMVAGGR (228 aa)). Residues Cys-17, Cys-21, and Cys-24 each coordinate [4Fe-4S] cluster. Residues Cys-61, Cys-96, Cys-154, and Arg-221 each coordinate [2Fe-2S] cluster.

Belongs to the radical SAM superfamily. Biotin synthase family. In terms of assembly, homodimer. The cofactor is [4Fe-4S] cluster. [2Fe-2S] cluster serves as cofactor.

It carries out the reaction (4R,5S)-dethiobiotin + (sulfur carrier)-SH + 2 reduced [2Fe-2S]-[ferredoxin] + 2 S-adenosyl-L-methionine = (sulfur carrier)-H + biotin + 2 5'-deoxyadenosine + 2 L-methionine + 2 oxidized [2Fe-2S]-[ferredoxin]. The protein operates within cofactor biosynthesis; biotin biosynthesis; biotin from 7,8-diaminononanoate: step 2/2. In terms of biological role, catalyzes the conversion of dethiobiotin (DTB) to biotin by the insertion of a sulfur atom into dethiobiotin via a radical-based mechanism. The chain is Biotin synthase from Helicobacter pylori (strain J99 / ATCC 700824) (Campylobacter pylori J99).